A 561-amino-acid polypeptide reads, in one-letter code: DNA ligase B (561 aa).

Lysine 125 (N6-AMP-lysine intermediate) is an active-site residue.

Belongs to the NAD-dependent DNA ligase family. LigB subfamily.

It catalyses the reaction NAD(+) + (deoxyribonucleotide)n-3'-hydroxyl + 5'-phospho-(deoxyribonucleotide)m = (deoxyribonucleotide)n+m + AMP + beta-nicotinamide D-nucleotide.. Catalyzes the formation of phosphodiester linkages between 5'-phosphoryl and 3'-hydroxyl groups in double-stranded DNA using NAD as a coenzyme and as the energy source for the reaction. This is DNA ligase B from Salmonella newport (strain SL254).